The sequence spans 563 residues: Zinc finger protein 503 (563 aa).

Residues 1–10 are compositionally biased toward polar residues; sequence MITSPSASRN. Disordered stretches follow at residues 1–48 and 101–226; these read MITS…PLRQ and SQIG…TSVS. Low complexity-rich tracts occupy residues 19-33 and 112-122; these read SSSS…AVAS and SKLSSVTSNGS. Over residues 174-194 the composition is skewed to polar residues; the sequence is ATCQPFTPRTGSPNSSTSASP. Residues 199-211 show a composition bias toward basic and acidic residues; it reads GKGERDEKKDSDC. A compositionally biased stretch (polar residues) spans 212 to 226; it reads NKNCSSDGSAPTSVS. A C2H2-type zinc finger spans residues 431–459; that stretch reads HVCNWVSANGPCDKRFSSSEELLNHLRTH.

Belongs to the Elbow/Noc family. As to quaternary structure, interacts with nlz1.

The protein resides in the nucleus. In terms of biological role, required for segmental gene expression during hindbrain development. May function as a transcriptional repressor. The protein is Zinc finger protein 503 (znf503) of Danio rerio (Zebrafish).